The following is a 552-amino-acid chain: FERRY endosomal RAB5 effector complex subunit 3 (552 aa).

Residues 383 to 403 are disordered; that stretch reads LKESLDSGNQNGGNDDKTKNA.

Component of the FERRY complex composed of five subunits, TBCK, PPP1R21, FERRY3, CRYZL1 and GATD1 with a ratio of 1:2:1:2:4, respectively.

The protein localises to the cytoplasm. Its subcellular location is the early endosome. Component of the FERRY complex (Five-subunit Endosomal Rab5 and RNA/ribosome intermediary). The FERRY complex directly interacts with mRNAs and RAB5A, and functions as a RAB5A effector involved in the localization and the distribution of specific mRNAs most likely by mediating their endosomal transport. The complex recruits mRNAs and ribosomes to early endosomes through direct mRNA-interaction. Plays a role in mast cell degranulation. In Pongo abelii (Sumatran orangutan), this protein is FERRY endosomal RAB5 effector complex subunit 3.